Consider the following 435-residue polypeptide: GTPase Der (435 aa).

2 EngA-type G domains span residues 2-167 (ATVV…RESG) and 178-351 (PKIA…ESYC). Residues 8–15 (GRANVGKS), 55–59 (DTCGV), 118–121 (NKSE), 184–191 (GKPNVGKS), 231–235 (DTAGM), and 297–300 (NKFD) contribute to the GTP site. Positions 352 to 435 (RKVPQQLLSK…PLVIEFKSRR (84 aa)) constitute a KH-like domain.

It belongs to the TRAFAC class TrmE-Era-EngA-EngB-Septin-like GTPase superfamily. EngA (Der) GTPase family. As to quaternary structure, associates with the 50S ribosomal subunit.

GTPase that plays an essential role in the late steps of ribosome biogenesis. This is GTPase Der from Pseudothermotoga lettingae (strain ATCC BAA-301 / DSM 14385 / NBRC 107922 / TMO) (Thermotoga lettingae).